The sequence spans 317 residues: MSIPVKKNLVSEAKYALKCPNAMSAEYITIHNTANDASAANEISYMIGNTSSTSFHFAVDDQEVIQGLPLNRNAWHTGDGTNGPGNRKSIGVEICYSKSGGPKYEAAEALAISFVAQLLKERGWGIDRVRKHQDWSGKYCPHRILSEGRWDQVKAAIEKELNGGVSAKKAAVSSSASEYHVKKGDTLSGIAASHGASVKTLQSINHITDPNHIKIGQVIKLPQTASASKSHAASSYPLPSGVIKVTSPLTQGTKVKQVQTALAALYFYPDKGAKNHGVDGVYGPKTANAVKRFQSVSGLTADGIYGPKTKAKMEEKL.

A signal peptide spans 1–39; sequence MSIPVKKNLVSEAKYALKCPNAMSAEYITIHNTANDASA. Residues 40–142 form the N-acetylmuramoyl-L-alanine amidase domain; the sequence is ANEISYMIGN…QDWSGKYCPH (103 aa). Positions 177-221 constitute a LysM domain; it reads SEYHVKKGDTLSGIAASHGASVKTLQSINHITDPNHIKIGQVIKL.

Belongs to the N-acetylmuramoyl-L-alanine amidase 2 family.

The protein resides in the secreted. It carries out the reaction Hydrolyzes the link between N-acetylmuramoyl residues and L-amino acid residues in certain cell-wall glycopeptides.. Its function is as follows. Autolysins are involved in some important biological processes such as cell separation, cell-wall turnover, competence for genetic transformation, formation of the flagella and sporulation. The protein is N-acetylmuramoyl-L-alanine amidase XlyB (xlyB) of Bacillus subtilis (strain 168).